Consider the following 721-residue polypeptide: Procollagen-lysine,2-oxoglutarate 5-dioxygenase (721 aa).

A signal peptide spans 1–21; sequence MRIQQSALLLLLLAVTSQGDA. Asn504, Asn530, and Asn536 each carry an N-linked (GlcNAc...) asparagine glycan. The region spanning 627-721 is the Fe2OG dioxygenase domain; the sequence is NPPRALMNFM…RYIMISFIDP (95 aa). Fe cation is bound by residues His650 and Asp652. Asn680 carries an N-linked (GlcNAc...) asparagine glycan. His702 serves as a coordination point for Fe cation. The N-linked (GlcNAc...) asparagine glycan is linked to Asn709. 2-oxoglutarate is bound at residue Arg712.

L-ascorbate is required as a cofactor. The cofactor is Fe(2+).

The protein localises to the endoplasmic reticulum. It localises to the secreted. Its subcellular location is the extracellular space. The catalysed reaction is L-lysyl-[collagen] + 2-oxoglutarate + O2 = (5R)-5-hydroxy-L-lysyl-[collagen] + succinate + CO2. Forms hydroxylysine residues in collagen type IV. Required for the secretion of collagen type IV (vkg) from haemocytes, fat body and follicle cells. The sequence is that of Procollagen-lysine,2-oxoglutarate 5-dioxygenase from Drosophila melanogaster (Fruit fly).